We begin with the raw amino-acid sequence, 186 residues long: Protein GrpE (186 aa).

Over residues Met1–Gln15 the composition is skewed to polar residues. The tract at residues Met1–Ala20 is disordered.

It belongs to the GrpE family. Homodimer.

Its subcellular location is the cytoplasm. Functionally, participates actively in the response to hyperosmotic and heat shock by preventing the aggregation of stress-denatured proteins, in association with DnaK and GrpE. It is the nucleotide exchange factor for DnaK and may function as a thermosensor. Unfolded proteins bind initially to DnaJ; upon interaction with the DnaJ-bound protein, DnaK hydrolyzes its bound ATP, resulting in the formation of a stable complex. GrpE releases ADP from DnaK; ATP binding to DnaK triggers the release of the substrate protein, thus completing the reaction cycle. Several rounds of ATP-dependent interactions between DnaJ, DnaK and GrpE are required for fully efficient folding. In Pseudomonas aeruginosa (strain UCBPP-PA14), this protein is Protein GrpE.